The primary structure comprises 562 residues: Terpene synthase 2 (562 aa).

Mg(2+) is bound by residues Asp315, Asp319, Asp459, and Glu467. Residues 315-319 carry the DDXXD motif motif; sequence DDEYD.

It belongs to the terpene synthase family. Tpsa subfamily. The cofactor is Mg(2+). Requires Mn(2+) as cofactor. In terms of tissue distribution, expressed at low levels in stems, leaves, roots and fruits.

The enzyme catalyses (2E,6E)-farnesyl diphosphate = delta-cadinene + diphosphate. It catalyses the reaction (2E,6E)-farnesyl diphosphate = alpha-cadinene + diphosphate. The catalysed reaction is (2E,6E)-farnesyl diphosphate + H2O = (-)-delta-cadinol + diphosphate. It participates in secondary metabolite biosynthesis; terpenoid biosynthesis. In terms of biological role, sesquiterpene synthase involved in the biosynthesis of volatile compounds that contribute to the characteristic flavors of black pepper. Mediates the conversion of (2E,6E)-farnesyl diphosphate (FPP) into alpha-cadinene, delta-cadinene and delta-cadinol. This Piper nigrum (Black pepper) protein is Terpene synthase 2.